Here is a 430-residue protein sequence, read N- to C-terminus: Enolase (430 aa).

Position 167 (Gln-167) interacts with (2R)-2-phosphoglycerate. Glu-209 serves as the catalytic Proton donor. Mg(2+) contacts are provided by Asp-246, Glu-289, and Asp-316. Residues Lys-341, Arg-370, Ser-371, and Lys-392 each coordinate (2R)-2-phosphoglycerate. Catalysis depends on Lys-341, which acts as the Proton acceptor.

The protein belongs to the enolase family. Component of the RNA degradosome, a multiprotein complex involved in RNA processing and mRNA degradation. Mg(2+) is required as a cofactor.

The protein localises to the cytoplasm. The protein resides in the secreted. It is found in the cell surface. It catalyses the reaction (2R)-2-phosphoglycerate = phosphoenolpyruvate + H2O. It participates in carbohydrate degradation; glycolysis; pyruvate from D-glyceraldehyde 3-phosphate: step 4/5. In terms of biological role, catalyzes the reversible conversion of 2-phosphoglycerate (2-PG) into phosphoenolpyruvate (PEP). It is essential for the degradation of carbohydrates via glycolysis. The sequence is that of Enolase from Alteromonas mediterranea (strain DSM 17117 / CIP 110805 / LMG 28347 / Deep ecotype).